Reading from the N-terminus, the 207-residue chain is ATP-dependent Clp protease proteolytic subunit (207 aa).

The active-site Nucleophile is serine 111. Residue histidine 136 is part of the active site.

This sequence belongs to the peptidase S14 family. As to quaternary structure, fourteen ClpP subunits assemble into 2 heptameric rings which stack back to back to give a disk-like structure with a central cavity, resembling the structure of eukaryotic proteasomes.

Its subcellular location is the cytoplasm. The enzyme catalyses Hydrolysis of proteins to small peptides in the presence of ATP and magnesium. alpha-casein is the usual test substrate. In the absence of ATP, only oligopeptides shorter than five residues are hydrolyzed (such as succinyl-Leu-Tyr-|-NHMec, and Leu-Tyr-Leu-|-Tyr-Trp, in which cleavage of the -Tyr-|-Leu- and -Tyr-|-Trp bonds also occurs).. In terms of biological role, cleaves peptides in various proteins in a process that requires ATP hydrolysis. Has a chymotrypsin-like activity. Plays a major role in the degradation of misfolded proteins. The sequence is that of ATP-dependent Clp protease proteolytic subunit from Aliivibrio fischeri (strain ATCC 700601 / ES114) (Vibrio fischeri).